We begin with the raw amino-acid sequence, 135 residues long: ARGOS-like protein (135 aa).

Positions 71–122 are organ Size Related (OSR) domain; the sequence is FSLESMVVLVGLTASLLILPLILPPLPPPPFMLLLIPIGIMVLLMVLAFMPS. Transmembrane regions (helical) follow at residues 76-96 and 100-120; these read MVVL…LPPL and PFML…LAFM.

Belongs to the plant organ size related (OSR) protein family. Expressed in cotyledons, roots, flowers, siliques and leaves.

Its subcellular location is the membrane. The protein resides in the nucleus. It localises to the cytoplasm. It is found in the endoplasmic reticulum. In terms of biological role, promotes cell expansion-dependent organ growth, probably via a brassinosteroids signaling pathway. Acts downstream of BRI1. The sequence is that of ARGOS-like protein (ARL) from Arabidopsis thaliana (Mouse-ear cress).